The sequence spans 1088 residues: DNA-directed RNA polymerase subunit beta (1088 aa).

It belongs to the RNA polymerase beta chain family. In plastids the minimal PEP RNA polymerase catalytic core is composed of four subunits: alpha, beta, beta', and beta''. When a (nuclear-encoded) sigma factor is associated with the core the holoenzyme is formed, which can initiate transcription.

It is found in the plastid. The protein localises to the chloroplast. The enzyme catalyses RNA(n) + a ribonucleoside 5'-triphosphate = RNA(n+1) + diphosphate. DNA-dependent RNA polymerase catalyzes the transcription of DNA into RNA using the four ribonucleoside triphosphates as substrates. The chain is DNA-directed RNA polymerase subunit beta from Chlorokybus atmophyticus (Soil alga).